We begin with the raw amino-acid sequence, 95 residues long: Small ribosomal subunit protein uS17 (95 aa).

Belongs to the universal ribosomal protein uS17 family. In terms of assembly, part of the 30S ribosomal subunit.

Functionally, one of the primary rRNA binding proteins, it binds specifically to the 5'-end of 16S ribosomal RNA. This Phytoplasma australiense protein is Small ribosomal subunit protein uS17.